Consider the following 1100-residue polypeptide: Tyrosine-protein kinase JAK3 (1100 aa).

Positions 1–223 (MAPPSEETPL…RRTVVQALRR (223 aa)) are cytokine/interferon/growth hormone receptors. A Phosphoserine modification is found at Ser-17. The FERM domain maps to 24 to 353 (GALHVLLPPR…GYFRLICDSR (330 aa)). Positions 372–472 (LCHGPITLDF…GTALNLTSCC (101 aa)) constitute an SH2; atypical domain. The region spanning 517-777 (LEWHENLGHG…AILRDLNGLI (261 aa)) is the Protein kinase 1 domain. Tyr-781 bears the Phosphotyrosine; by autocatalysis mark. The 274-residue stretch at 818–1091 (LKYISLLGKG…PAFDTLSPQL (274 aa)) folds into the Protein kinase 2 domain. Residues 824–832 (LGKGNFGSV) and Lys-851 each bind ATP. Residues Tyr-900 and Tyr-935 each carry the phosphotyrosine modification. The active-site Proton acceptor is the Asp-945. A phosphotyrosine; by autocatalysis mark is found at Tyr-976 and Tyr-977.

The protein belongs to the protein kinase superfamily. Tyr protein kinase family. JAK subfamily. As to quaternary structure, interacts with STAM2 and MYO18A. Interacts with SHB. Interacts with CD69. In terms of processing, autophosphorylated, leading to regulate its activity. IL2 promotes phosphorylation on tyrosine residues, including autophosphorylation on Tyr-781. Dephosphorylation of Tyr-976 and Tyr-977 by PTPN2 negatively regulates cytokine-mediated signaling. As to expression, in contrast with the ubiquitous expression of the other JAKs, JAK3 is predominantly expressed in hematopoietic tissues.

It localises to the endomembrane system. It is found in the cytoplasm. The catalysed reaction is L-tyrosyl-[protein] + ATP = O-phospho-L-tyrosyl-[protein] + ADP + H(+). Its function is as follows. Non-receptor tyrosine kinase involved in various processes such as cell growth, development, or differentiation. Mediates essential signaling events in both innate and adaptive immunity and plays a crucial role in hematopoiesis during T-cells development. In the cytoplasm, plays a pivotal role in signal transduction via its association with type I receptors sharing the common subunit gamma such as IL2R, IL4R, IL7R, IL9R, IL15R and IL21R. Following ligand binding to cell surface receptors, phosphorylates specific tyrosine residues on the cytoplasmic tails of the receptor, creating docking sites for STATs proteins. Subsequently, phosphorylates the STATs proteins once they are recruited to the receptor. Phosphorylated STATs then form homodimer or heterodimers and translocate to the nucleus to activate gene transcription. For example, upon IL2R activation by IL2, JAK1 and JAK3 molecules bind to IL2R beta (IL2RB) and gamma chain (IL2RG) subunits inducing the tyrosine phosphorylation of both receptor subunits on their cytoplasmic domain. Then, STAT5A and STAT5B are recruited, phosphorylated and activated by JAK1 and JAK3. Once activated, dimerized STAT5 translocates to the nucleus and promotes the transcription of specific target genes in a cytokine-specific fashion. This is Tyrosine-protein kinase JAK3 from Rattus norvegicus (Rat).